The sequence spans 448 residues: MRECISVHVGQAGVQMGNACWELYCLEHGIQPDGQMPSDKTIGGGDDSFTTFFCETGAGKHVPRAVFVDLEPTVIDEIRNGPYRQLFHPEQLITGKEDAANNYARGHYTIGKEIIDPVLDRIRKLSDQCTGLQGFLVFHSFGGGTGSGFTSLLMERLSVDYGKKSKLEFSIYPAPQVSTAVVEPYNSILTTHTTLEHSDCAFMVDNEAIYDICRRNLDIERPTYTNLNRLISQIVSSITASLRFDGALNVDLTEFQTNLVPYPRIHFPLATYAPVISAEKAYHEQLSVAEITNACFEPANQMVKCDPRHGKYMACCLLYRGDVVPKDVNAAIAAIKTKRSIQFVDWCPTGFKVGINYQPPTVVPGGDLAKVQRAVCMLSNTTAIAEAWARLDHKFDLMYAKRAFVHWYVGEGMEEGEFSEAREDMAALEKDYEEVGIDSYEDEDEGEE.

Positions 1 to 4 (MREC) match the MREC motif motif. Glutamine 11 provides a ligand contact to GTP. Lysine 40 is subject to N6-acetyllysine. Serine 48 carries the phosphoserine modification. Glutamate 71 is a GTP binding site. A Mg(2+)-binding site is contributed by glutamate 71. Residue tyrosine 83 is modified to 3'-nitrotyrosine. The GTP site is built by serine 140, glycine 144, threonine 145, threonine 179, asparagine 206, and asparagine 228. Residue glutamate 254 is part of the active site. Tyrosine 432 bears the Phosphotyrosine mark. Serine 439 bears the Phosphoserine mark.

It belongs to the tubulin family. In terms of assembly, dimer of alpha and beta chains. A typical microtubule is a hollow water-filled tube with an outer diameter of 25 nm and an inner diameter of 15 nM. Alpha-beta heterodimers associate head-to-tail to form protofilaments running lengthwise along the microtubule wall with the beta-tubulin subunit facing the microtubule plus end conferring a structural polarity. Microtubules usually have 13 protofilaments but different protofilament numbers can be found in some organisms and specialized cells. Interacts with CFAP157. It depends on Mg(2+) as a cofactor. Some glutamate residues at the C-terminus are polyglycylated, resulting in polyglycine chains on the gamma-carboxyl group. Glycylation is mainly limited to tubulin incorporated into axonemes (cilia and flagella) whereas glutamylation is prevalent in neuronal cells, centrioles, axonemes, and the mitotic spindle. Both modifications can coexist on the same protein on adjacent residues, and lowering polyglycylation levels increases polyglutamylation, and reciprocally. Cilia and flagella glycylation is required for their stability and maintenance. Flagella glycylation controls sperm motility. Post-translationally, some glutamate residues at the C-terminus are polyglutamylated, resulting in polyglutamate chains on the gamma-carboxyl group. Polyglutamylation plays a key role in microtubule severing by spastin (SPAST). SPAST preferentially recognizes and acts on microtubules decorated with short polyglutamate tails: severing activity by SPAST increases as the number of glutamates per tubulin rises from one to eight, but decreases beyond this glutamylation threshold. Glutamylation is also involved in cilia motility. In terms of processing, acetylation of alpha chains at Lys-40 is located inside the microtubule lumen. This modification has been correlated with increased microtubule stability, intracellular transport and ciliary assembly. Methylation of alpha chains at Lys-40 is found in mitotic microtubules and is required for normal mitosis and cytokinesis contributing to genomic stability. Post-translationally, although this tubulin does not encode a C-terminal tyrosine, a C-terminal tyrosine can be added post-translationally by the tubulin tyrosine ligase (TTL). It can then undergo a detyrosination cycle by the tubulin tyrosine carboxypeptidase (MATCAP1/KIAA0895L).

The protein resides in the cytoplasm. Its subcellular location is the cytoskeleton. The catalysed reaction is GTP + H2O = GDP + phosphate + H(+). Functionally, tubulin is the major constituent of microtubules, a cylinder consisting of laterally associated linear protofilaments composed of alpha- and beta-tubulin heterodimers. Microtubules grow by the addition of GTP-tubulin dimers to the microtubule end, where a stabilizing cap forms. Below the cap, tubulin dimers are in GDP-bound state, owing to GTPase activity of alpha-tubulin. The polypeptide is Tubulin alpha-4A chain (TUBA4A) (Macaca fascicularis (Crab-eating macaque)).